The sequence spans 326 residues: 5-dehydro-2-deoxygluconokinase (326 aa).

It belongs to the carbohydrate kinase PfkB family.

The enzyme catalyses 5-dehydro-2-deoxy-D-gluconate + ATP = 6-phospho-5-dehydro-2-deoxy-D-gluconate + ADP + H(+). It functions in the pathway polyol metabolism; myo-inositol degradation into acetyl-CoA; acetyl-CoA from myo-inositol: step 5/7. Its function is as follows. Catalyzes the phosphorylation of 5-dehydro-2-deoxy-D-gluconate (2-deoxy-5-keto-D-gluconate or DKG) to 6-phospho-5-dehydro-2-deoxy-D-gluconate (DKGP). The chain is 5-dehydro-2-deoxygluconokinase from Lacticaseibacillus casei (Lactobacillus casei).